Consider the following 541-residue polypeptide: Ankyrin repeat domain-containing protein 13C (541 aa).

The span at 1-20 (MTGEKIRSLRRDHKPSKEEG) shows a compositional bias: basic and acidic residues. Positions 1–27 (MTGEKIRSLRRDHKPSKEEGDLLEPGD) are disordered. ANK repeat units follow at residues 111–142 (PAHY…QKDN), 143–172 (HGNT…PVKV), and 176–205 (QGWS…QQSR). Ser-411 carries the phosphoserine modification.

The protein resides in the endoplasmic reticulum membrane. In terms of biological role, acts as a molecular chaperone for G protein-coupled receptors, regulating their biogenesis and exit from the ER. The polypeptide is Ankyrin repeat domain-containing protein 13C (ANKRD13C) (Homo sapiens (Human)).